Reading from the N-terminus, the 193-residue chain is Probable nicotinate-nucleotide adenylyltransferase (193 aa).

This sequence belongs to the NadD family.

The enzyme catalyses nicotinate beta-D-ribonucleotide + ATP + H(+) = deamido-NAD(+) + diphosphate. It participates in cofactor biosynthesis; NAD(+) biosynthesis; deamido-NAD(+) from nicotinate D-ribonucleotide: step 1/1. Its function is as follows. Catalyzes the reversible adenylation of nicotinate mononucleotide (NaMN) to nicotinic acid adenine dinucleotide (NaAD). This is Probable nicotinate-nucleotide adenylyltransferase from Flavobacterium psychrophilum (strain ATCC 49511 / DSM 21280 / CIP 103535 / JIP02/86).